Here is a 56-residue protein sequence, read N- to C-terminus: Large ribosomal subunit protein bL33 (56 aa).

Belongs to the bacterial ribosomal protein bL33 family.

The chain is Large ribosomal subunit protein bL33 from Haemophilus influenzae (strain 86-028NP).